Consider the following 211-residue polypeptide: Testis-expressed protein 35 (211 aa).

Residues 47–111 are a coiled coil; the sequence is GGTKELKNEL…MDVLINIQKN (65 aa).

The sequence is that of Testis-expressed protein 35 (Tex35) from Bos taurus (Bovine).